The following is a 118-amino-acid chain: T cell receptor gamma variable 2 (118 aa).

Positions 1–17 (MQWALAVLLAFLSPASQ) are cleaved as a signal peptide. The 101-residue stretch at 18-118 (KSSNLEGRTK…GVYYCATWDG (101 aa)) folds into the Ig-like domain. The cysteines at positions 41 and 113 are disulfide-linked.

Gamma-delta TR is a heterodimer composed of a gamma and delta chain; disulfide-linked. The gamma-delta TR is associated with the transmembrane signaling CD3 coreceptor proteins following the stoichiometry: a single gamma-delta TR heterodimer associates with one CD3D-CD3E heterodimer, one CD3G-CD3E heterodimer and one CD247 homodimer forming a stable octameric structure. Upon activation, gamma-delta TR complex associates with FCER1G to initiate intracellular signaling.

The protein resides in the cell membrane. Functionally, v region of the variable domain of T cell receptor (TR) gamma chain that participates in the antigen recognition. Gamma-delta TRs recognize a variety of self and foreign non-peptide antigens frequently expressed at the epithelial boundaries between the host and external environment, including endogenous lipids presented by MH-like protein CD1D and phosphoantigens presented by butyrophilin-like molecule BTN3A1. Upon antigen recognition induces rapid, innate-like immune responses involved in pathogen clearance and tissue repair. Binding of gamma-delta TR complex to antigen triggers phosphorylation of immunoreceptor tyrosine-based activation motifs (ITAMs) in the CD3 chains by the LCK and FYN kinases, allowing the recruitment, phosphorylation, and activation of ZAP70 that facilitates phosphorylation of the scaffolding proteins LCP2 and LAT. This lead to the formation of a supramolecular signalosome that recruits the phospholipase PLCG1, resulting in calcium mobilization and ERK activation, ultimately leading to T cell expansion and differentiation into effector cells. Gamma-delta TRs are produced through somatic rearrangement of a limited repertoire of variable (V), diversity (D), and joining (J) genes. The potential diversity of gamma-delta TRs is conferred by the unique ability to rearrange (D) genes in tandem and to utilize all three reading frames. The combinatorial diversity is considerably increased by the sequence exonuclease trimming and random nucleotide (N) region additions which occur during the V-(D)-J rearrangements. The sequence is that of T cell receptor gamma variable 2 from Homo sapiens (Human).